The sequence spans 151 residues: Multiprotein-bridging factor 1 (151 aa).

A disordered region spans residues 1–32 (MSSDWDSVTIIGQKARVGGGGPRENVAKTSSQ). Residues 86-140 (IQQARQEKKLTQKELATKVNEKPNVINDYEAGRAIPNQQLLAKLERALGVKLRGK) form the HTH cro/C1-type domain. A DNA-binding region (H-T-H motif) is located at residues 97–116 (QKELATKVNEKPNVINDYEA).

It belongs to the MBF1 family.

Functionally, transcriptional coactivator that stimulates GCN4-dependent transcriptional activity by bridging the DNA-binding region of GCN4 and TBP (SPT15), thereby recruiting TBP to GCN4-bound promoters. Involved in induction of the ribosome quality control (RQC) pathway; a pathway that degrades nascent peptide chains during problematic translation. Required to prevent stalled ribosomes from frameshifting. In Candida albicans (strain SC5314 / ATCC MYA-2876) (Yeast), this protein is Multiprotein-bridging factor 1 (MBF1).